The chain runs to 84 residues: UPF0410 protein YmgE (84 aa).

The next 3 helical transmembrane spans lie at M1–M21, G27–A47, and G58–F78.

It belongs to the UPF0410 family.

The protein localises to the cell inner membrane. This chain is UPF0410 protein YmgE (ymgE), found in Escherichia coli O127:H6 (strain E2348/69 / EPEC).